We begin with the raw amino-acid sequence, 304 residues long: Cell division protein ZipA (304 aa).

The Periplasmic portion of the chain corresponds to 1–5 (MQDLR). Residues 6 to 26 (LILIVVGAIAIIALLLHGLWT) form a helical membrane-spanning segment. The Cytoplasmic segment spans residues 27–304 (SRKERSSVFR…IRDVIDANSH (278 aa)). The disordered stretch occupies residues 31–165 (RSSVFRDRPH…PEPQSQPKQK (135 aa)). Residues 121–132 (ARPETHKPDQPE) are compositionally biased toward basic and acidic residues. Residues 137 to 158 (AAPAAAETAPAPAEPAQKTPEP) are compositionally biased toward low complexity.

The protein belongs to the ZipA family. Interacts with FtsZ via their C-terminal domains.

It localises to the cell inner membrane. Essential cell division protein that stabilizes the FtsZ protofilaments by cross-linking them and that serves as a cytoplasmic membrane anchor for the Z ring. Also required for the recruitment to the septal ring of downstream cell division proteins. The protein is Cell division protein ZipA of Erwinia tasmaniensis (strain DSM 17950 / CFBP 7177 / CIP 109463 / NCPPB 4357 / Et1/99).